A 552-amino-acid polypeptide reads, in one-letter code: Undecaprenyl phosphate-alpha-4-amino-4-deoxy-L-arabinose arabinosyl transferase (552 aa).

Helical transmembrane passes span I4 to G24, F81 to L101, V113 to V133, F176 to I196, F207 to A227, A255 to L275, Q289 to A309, L313 to Q333, L351 to T371, V384 to H404, and W411 to V431.

Belongs to the glycosyltransferase 83 family.

Its subcellular location is the cell inner membrane. The catalysed reaction is 4-amino-4-deoxy-alpha-L-arabinopyranosyl di-trans,octa-cis-undecaprenyl phosphate + lipid IVA = lipid IIA + di-trans,octa-cis-undecaprenyl phosphate.. Its pathway is lipopolysaccharide metabolism; 4-amino-4-deoxy-beta-L-arabinose-lipid A biosynthesis. Its function is as follows. Catalyzes the transfer of the L-Ara4N moiety of the glycolipid undecaprenyl phosphate-alpha-L-Ara4N to lipid A. The modified arabinose is attached to lipid A and is required for resistance to polymyxin and cationic antimicrobial peptides. In Edwardsiella ictaluri (strain 93-146), this protein is Undecaprenyl phosphate-alpha-4-amino-4-deoxy-L-arabinose arabinosyl transferase.